A 468-amino-acid polypeptide reads, in one-letter code: ATP synthase subunit beta (468 aa).

Position 155-162 (Gly-155–Thr-162) interacts with ATP.

This sequence belongs to the ATPase alpha/beta chains family. In terms of assembly, F-type ATPases have 2 components, CF(1) - the catalytic core - and CF(0) - the membrane proton channel. CF(1) has five subunits: alpha(3), beta(3), gamma(1), delta(1), epsilon(1). CF(0) has three main subunits: a(1), b(2) and c(9-12). The alpha and beta chains form an alternating ring which encloses part of the gamma chain. CF(1) is attached to CF(0) by a central stalk formed by the gamma and epsilon chains, while a peripheral stalk is formed by the delta and b chains.

Its subcellular location is the cell membrane. It carries out the reaction ATP + H2O + 4 H(+)(in) = ADP + phosphate + 5 H(+)(out). Produces ATP from ADP in the presence of a proton gradient across the membrane. The catalytic sites are hosted primarily by the beta subunits. The protein is ATP synthase subunit beta of Streptococcus pneumoniae (strain CGSP14).